A 472-amino-acid chain; its full sequence is Pentatricopeptide repeat-containing protein At5g46100 (472 aa).

PPR repeat units follow at residues 50-84, 85-119, 120-154, 155-190, 191-225, 226-260, 261-295, 296-330, 331-365, 373-406, and 407-441; these read DQSSFGYMVLRLVSANKFKAAEDLIVRMKIENCVV, SEDILLSICRGYGRVHRPFDSLRVFHKMKDFDCDP, SQKAYVTVLAILVEENQLNLAFKFYKNMREIGLPP, TVASLNVLIKALCRNDGTVDAGLKIFLEMPKRGCDP, DSYTYGTLISGLCRFGRIDEAKKLFTEMVEKDCAP, TVVTYTSLINGLCGSKNVDEAMRYLEEMKSKGIEP, NVFTYSSLMDGLCKDGRSLQAMELFEMMMARGCRP, NMVTYTTLITGLCKEQKIQEAVELLDRMNLQGLKP, DAGLYGKVISGFCAISKFREAANFLDEMILGGITP, HVKTSNEVVRGLCANYPSRAFTLYLSMRSRGISV, and EVETLESLVKCLCKKGEFQKAVQLVDEIVTDGCIP.

This sequence belongs to the PPR family. P subfamily.

This chain is Pentatricopeptide repeat-containing protein At5g46100, found in Arabidopsis thaliana (Mouse-ear cress).